Reading from the N-terminus, the 278-residue chain is Putative peptidase Cgl1093 (278 aa).

Residues 1 to 32 (MSSASFTTKALSVLAALTAASAPLVAASPAHA) form the signal peptide. A Peptidase S1 domain is found at 33 to 236 (LANARNVTGS…HAEWIAYYTG (204 aa)). A disulfide bridge links Cys59 with Cys75. Active-site charge relay system residues include His74, Asp123, and Ser189.

Belongs to the peptidase S1 family.

Its subcellular location is the secreted. The sequence is that of Putative peptidase Cgl1093 from Corynebacterium glutamicum (strain ATCC 13032 / DSM 20300 / JCM 1318 / BCRC 11384 / CCUG 27702 / LMG 3730 / NBRC 12168 / NCIMB 10025 / NRRL B-2784 / 534).